Here is a 305-residue protein sequence, read N- to C-terminus: Fatty acid elongase 1 (305 aa).

Transmembrane regions (helical) follow at residues 24–44 (MIAN…FVFI), 80–100 (VVWN…VTPV), 129–149 (FWMG…IFLV), 158–178 (FLHW…YCVG), 183–203 (IWVA…FALA), 217–237 (YITI…IFAL), and 257–277 (IQLV…VASY). The short motif at 160 to 164 (HWYHH) is the HxxHH motif element. His-163 functions as the Nucleophile in the catalytic mechanism. A disordered region spans residues 284 to 305 (PTVGGPSSTAGVSNGSVEKKVK). A compositionally biased stretch (polar residues) spans 288–299 (GPSSTAGVSNGS). The N-linked (GlcNAc...) asparagine glycan is linked to Asn-297.

The protein belongs to the ELO family.

Its subcellular location is the endoplasmic reticulum membrane. The catalysed reaction is an acyl-CoA + malonyl-CoA + H(+) = a 3-oxoacyl-CoA + CO2 + CoA. Its pathway is lipid metabolism; fatty acid biosynthesis. In terms of biological role, involved in the synthesis of fatty acids. Elongates C4 fatty acids to C10. This chain is Fatty acid elongase 1, found in Trypanosoma brucei brucei (strain 927/4 GUTat10.1).